Here is a 987-residue protein sequence, read N- to C-terminus: 110 kDa U5 small nuclear ribonucleoprotein component CLO (987 aa).

A disordered region spans residues 1-54 (MESSLYDEFGNYVGPEIESDRDSDDEVEDEDLQDKHLEENGSDGEQGPGGSNGW). The segment covering 17-32 (IESDRDSDDEVEDEDL) has biased composition (acidic residues). A tr-type G domain is found at 136–422 (ALVRNVALVG…LGVTLSNSAY (287 aa)). The G1 stretch occupies residues 145 to 152 (GHLQHGKT). 145-152 (GHLQHGKT) is a binding site for GTP. The interval 189-193 (NISIK) is G2. A G3 region spans residues 215-218 (DTPG). Residues 215–219 (DTPGH) and 269–272 (NKVD) each bind GTP. Residues 269-272 (NKVD) are G4. Positions 395-397 (YSQ) are G5.

This sequence belongs to the TRAFAC class translation factor GTPase superfamily. Classic translation factor GTPase family. In terms of assembly, interacts with BRR2A and PRP8A. Expressed in flower buds, open flowers and siliques. Expressed at low levels in rosettes leaves, cauline leaves and stems.

Its subcellular location is the nucleus speckle. In terms of biological role, splicing factor involved in pre-mRNA splicing and component of the spliceosome. Essential for reproduction. In female gametophyte, is necessary for the egg cell and central cell fate determination and hence reproductive success. Involved in a mechanism that prevents accessory cells from adopting gametic cell fate. Is necessary to restrict LIS expression to interfere with egg-cell specification. Probable component of U5 small nuclear ribonucleoprotein (snRNP) that is required for pre-mRNA splicing. Plays an essential role in female gametogenesis and embryo development. Required for the control of polarized cell growth and cell proliferation during floral organ morphogenesis. The chain is 110 kDa U5 small nuclear ribonucleoprotein component CLO from Arabidopsis thaliana (Mouse-ear cress).